Consider the following 143-residue polypeptide: Cold shock domain-containing protein CG9705 (143 aa).

The segment at 1-30 is disordered; that stretch reads MTEPRTPEKLLAAKPPVLHHNSHSPNASLQ. Phosphoserine occurs at positions 22, 24, 28, and 33. The CSD domain maps to 54-121; the sequence is VVTGMVKSFS…KHQAVHVQIS (68 aa). Phosphoserine is present on residues serine 139 and serine 140.

This Drosophila melanogaster (Fruit fly) protein is Cold shock domain-containing protein CG9705.